The primary structure comprises 378 residues: Signal recognition particle receptor FtsY (378 aa).

Residues glycine 184–threonine 191, aspartate 266–arginine 270, and threonine 330–aspartate 333 contribute to the GTP site.

This sequence belongs to the GTP-binding SRP family. FtsY subfamily. Part of the signal recognition particle protein translocation system, which is composed of SRP and FtsY. SRP is a ribonucleoprotein composed of Ffh and a 4.5S RNA molecule.

It is found in the cell membrane. The protein resides in the cytoplasm. It catalyses the reaction GTP + H2O = GDP + phosphate + H(+). In terms of biological role, involved in targeting and insertion of nascent membrane proteins into the cytoplasmic membrane. Acts as a receptor for the complex formed by the signal recognition particle (SRP) and the ribosome-nascent chain (RNC). Interaction with SRP-RNC leads to the transfer of the RNC complex to the Sec translocase for insertion into the membrane, the hydrolysis of GTP by both Ffh and FtsY, and the dissociation of the SRP-FtsY complex into the individual components. The polypeptide is Signal recognition particle receptor FtsY (Buchnera aphidicola subsp. Acyrthosiphon pisum (strain APS) (Acyrthosiphon pisum symbiotic bacterium)).